A 132-amino-acid polypeptide reads, in one-letter code: Small ribosomal subunit protein eS6 (132 aa).

The protein belongs to the eukaryotic ribosomal protein eS6 family.

This is Small ribosomal subunit protein eS6 from Methanosphaerula palustris (strain ATCC BAA-1556 / DSM 19958 / E1-9c).